A 230-amino-acid polypeptide reads, in one-letter code: 5'-methylthioadenosine/S-adenosylhomocysteine nucleosidase (230 aa).

Catalysis depends on Glu12, which acts as the Proton acceptor. Residues Gly78, Ile153, and 174 to 175 (ME) contribute to the substrate site. Residue Asp198 is the Proton donor of the active site.

It belongs to the PNP/UDP phosphorylase family. MtnN subfamily.

It catalyses the reaction S-adenosyl-L-homocysteine + H2O = S-(5-deoxy-D-ribos-5-yl)-L-homocysteine + adenine. It carries out the reaction S-methyl-5'-thioadenosine + H2O = 5-(methylsulfanyl)-D-ribose + adenine. The catalysed reaction is 5'-deoxyadenosine + H2O = 5-deoxy-D-ribose + adenine. The protein operates within amino-acid biosynthesis; L-methionine biosynthesis via salvage pathway; S-methyl-5-thio-alpha-D-ribose 1-phosphate from S-methyl-5'-thioadenosine (hydrolase route): step 1/2. Functionally, catalyzes the irreversible cleavage of the glycosidic bond in both 5'-methylthioadenosine (MTA) and S-adenosylhomocysteine (SAH/AdoHcy) to adenine and the corresponding thioribose, 5'-methylthioribose and S-ribosylhomocysteine, respectively. Also cleaves 5'-deoxyadenosine, a toxic by-product of radical S-adenosylmethionine (SAM) enzymes, into 5-deoxyribose and adenine. The sequence is that of 5'-methylthioadenosine/S-adenosylhomocysteine nucleosidase from Shewanella denitrificans (strain OS217 / ATCC BAA-1090 / DSM 15013).